The following is a 120-amino-acid chain: NAD(P)H-quinone oxidoreductase subunit 3 (120 aa).

A run of 3 helical transmembrane segments spans residues 6–26 (GYDA…LALV), 64–84 (MFAL…PWAV), and 89–109 (LGLL…VALA).

This sequence belongs to the complex I subunit 3 family. NDH-1 can be composed of about 15 different subunits; different subcomplexes with different compositions have been identified which probably have different functions.

Its subcellular location is the cellular thylakoid membrane. The catalysed reaction is a plastoquinone + NADH + (n+1) H(+)(in) = a plastoquinol + NAD(+) + n H(+)(out). The enzyme catalyses a plastoquinone + NADPH + (n+1) H(+)(in) = a plastoquinol + NADP(+) + n H(+)(out). In terms of biological role, NDH-1 shuttles electrons from an unknown electron donor, via FMN and iron-sulfur (Fe-S) centers, to quinones in the respiratory and/or the photosynthetic chain. The immediate electron acceptor for the enzyme in this species is believed to be plastoquinone. Couples the redox reaction to proton translocation, and thus conserves the redox energy in a proton gradient. Cyanobacterial NDH-1 also plays a role in inorganic carbon-concentration. This chain is NAD(P)H-quinone oxidoreductase subunit 3, found in Prochlorococcus marinus (strain MIT 9313).